We begin with the raw amino-acid sequence, 146 residues long: Ribonuclease H (146 aa).

The region spanning 1–143 (MKEIIIYTDG…CDQLARNAIK (143 aa)) is the RNase H type-1 domain. Mg(2+) contacts are provided by Asp9, Glu47, Asp70, and Asp135.

The protein belongs to the RNase H family. Monomer. It depends on Mg(2+) as a cofactor.

It is found in the cytoplasm. The catalysed reaction is Endonucleolytic cleavage to 5'-phosphomonoester.. In terms of biological role, endonuclease that specifically degrades the RNA of RNA-DNA hybrids. The polypeptide is Ribonuclease H (Syntrophomonas wolfei subsp. wolfei (strain DSM 2245B / Goettingen)).